The chain runs to 96 residues: Envelope glycoprotein N (96 aa).

The signal sequence occupies residues 1–21 (MPRSPLIVAVVAAALFAIVRG). The Virion surface portion of the chain corresponds to 22–54 (RDPLLDAMRREGAMDFWSAGCYARGVPLSEPPQ). A helical transmembrane segment spans residues 55-75 (ALVVFYVALTAVMVAVALYAY). At 76-96 (GLCFRLMGASGPNKKESRGRG) the chain is on the intravirion side.

It belongs to the herpesviridae glycoprotein N family. Interacts (via N-terminus) with gM (via N-terminus). The gM-gN heterodimer forms the gCII complex.

The protein resides in the virion membrane. Its subcellular location is the host membrane. It localises to the host Golgi apparatus. The protein localises to the host trans-Golgi network. In terms of biological role, envelope glycoprotein necessary for proper maturation of gM and modulation of its membrane fusion activity. Also plays a critical role in virion morphogenesis. The protein is Envelope glycoprotein N of Bos taurus (Bovine).